Here is a 197-residue protein sequence, read N- to C-terminus: Phospholipid hydroperoxide glutathione peroxidase (197 aa).

S40 carries the post-translational modification Phosphoserine. The active site involves U73. Position 73 (U73) is a non-standard amino acid, selenocysteine.

It belongs to the glutathione peroxidase family. Monomer. Has a tendency to form higher mass oligomers. Interacts with FUNDC1; this interaction promotes GPX4 recruitment into mitochondria through TOM/TIM complex where it is degraded by mitophagy.

It localises to the mitochondrion. Its subcellular location is the cytoplasm. The enzyme catalyses a hydroperoxy polyunsaturated fatty acid + 2 glutathione = a hydroxy polyunsaturated fatty acid + glutathione disulfide + H2O. It carries out the reaction (12S)-hydroperoxy-(5Z,8Z,10E,14Z)-eicosatetraenoate + 2 glutathione = (12S)-hydroxy-(5Z,8Z,10E,14Z)-eicosatetraenoate + glutathione disulfide + H2O. It catalyses the reaction (13S)-hydroperoxy-(9Z,11E)-octadecadienoate + 2 glutathione = (13S)-hydroxy-(9Z,11E)-octadecadienoate + glutathione disulfide + H2O. In terms of biological role, essential antioxidant peroxidase that directly reduces phospholipid hydroperoxide even if they are incorporated in membranes and lipoproteins. Can also reduce fatty acid hydroperoxide, cholesterol hydroperoxide and thymine hydroperoxide. Plays a key role in protecting cells from oxidative damage by preventing membrane lipid peroxidation. Required to prevent cells from ferroptosis, a non-apoptotic cell death resulting from an iron-dependent accumulation of lipid reactive oxygen species. The presence of selenocysteine (Sec) versus Cys at the active site is essential for life: it provides resistance to overoxidation and prevents cells against ferroptosis. The presence of Sec at the active site is also essential for the survival of a specific type of parvalbumin-positive interneurons, thereby preventing against fatal epileptic seizures. May be required to protect cells from the toxicity of ingested lipid hydroperoxides. Required for normal sperm development and male fertility. Essential for maturation and survival of photoreceptor cells. Plays a role in a primary T-cell response to viral and parasitic infection by protecting T-cells from ferroptosis and by supporting T-cell expansion. Plays a role of glutathione peroxidase in platelets in the arachidonic acid metabolism. Reduces hydroperoxy ester lipids formed by a 15-lipoxygenase that may play a role as down-regulator of the cellular 15-lipoxygenase pathway. The sequence is that of Phospholipid hydroperoxide glutathione peroxidase from Sapajus apella (Brown-capped capuchin).